Consider the following 366-residue polypeptide: Phenylalanine dehydrogenase (366 aa).

Arg-45 lines the NAD(+) pocket. Lys-69 contributes to the L-phenylalanine binding site. Residue Lys-81 is part of the active site. NAD(+) contacts are provided by residues Asp-116, Thr-151, Gly-181 to Glu-187, Asp-204 to Ile-205, Ala-241 to Lys-242, and Ser-262 to Asn-264. Position 264 (Asn-264) interacts with L-phenylalanine.

Belongs to the Glu/Leu/Phe/Val dehydrogenases family.

The enzyme catalyses L-phenylalanine + NAD(+) + H2O = 3-phenylpyruvate + NH4(+) + NADH + H(+). It participates in amino-acid biosynthesis; L-phenylalanine biosynthesis; L-phenylalanine from phenylpyruvate (PDH route): step 1/1. Its function is as follows. Catalyzes the reversible NAD(+)-dependent oxidative deamination of L-phenylalanine to phenylpyruvate. The protein is Phenylalanine dehydrogenase of Thermoactinomyces intermedius.